A 123-amino-acid polypeptide reads, in one-letter code: Homeobox protein CDX-1 (123 aa).

The segment at residues 5–64 (KDKYRVVYTDHQRLELEKEFHYSRYITIRRKSELAANLGLTERQVKIWFQNRRAKERKVN) is a DNA-binding region (homeobox). The interaction with DNA stretch occupies residues 8-29 (YRVVYTDHQRLELEKEFHYSRY). Residues 47–58 (RQVKIWFQNRRA) form an interaction with 5-mCpG DNA region. A compositionally biased stretch (basic residues) spans 57–68 (RAKERKVNKKKQ). The disordered stretch occupies residues 57–123 (RAKERKVNKK…PVPVKEEFLP (67 aa)).

The protein belongs to the Caudal homeobox family. Intestinal epithelium.

Its subcellular location is the nucleus. Plays a role in transcriptional regulation. Involved in activated KRAS-mediated transcriptional activation of PRKD1 in colorectal cancer (CRC) cells. Binds to the PRKD1 promoter in colorectal cancer (CRC) cells. Could play a role in the terminal differentiation of the intestine. Binds preferentially to methylated DNA. The chain is Homeobox protein CDX-1 (Cdx1) from Rattus norvegicus (Rat).